Consider the following 519-residue polypeptide: F-box only protein 31-A (519 aa).

The interval 11–37 (GQSGGCRRRQQRKGAGNDPELEDEEEE) is disordered. One can recognise an F-box domain in the interval 54 to 100 (PHSLLLLPPEILVEIFSLLPGTELGGLAQVCSKFRQILTTDTIWKRR). Residues Cys196, His204, Cys220, and His226 each coordinate Zn(2+). Residues 369-390 (REQRQTDNEEDDGRGAGPDKAE) are compositionally biased toward basic and acidic residues. The disordered stretch occupies residues 369-424 (REQRQTDNEEDDGRGAGPDKAEPAQQPAPLLRPPNEDANGADDDGDGGEQKPPNVQ).

Belongs to the FBXO31 family. As to quaternary structure, part of a SCF (SKP1-cullin-F-box) protein ligase complex SCF(FBXO31).

The protein localises to the cytoplasm. Its pathway is protein modification; protein ubiquitination. In terms of biological role, substrate-recognition component of the SCF(FBXO31) protein ligase complex, which specifically mediates the ubiquitination of proteins amidated at their C-terminus in response to oxidative stress, leading to their degradation by the proteasome. Fbxo31 specifically recognizes and binds C-terminal peptides bearing an amide: C-terminal amidation in response to oxidative stress takes place following protein fragmentation. The SCF(FBXO31) also plays a role in G1 arrest following DNA damage by mediating ubiquitination of phosphorylated cyclin-D1 (ccnd1), promoting its degradation by the proteasome, resulting in G1 arrest. The SCF(FBXO31) complex is however not a major regulator of ccnd1 stability during the G1/S transition. The polypeptide is F-box only protein 31-A (fbxo31-a) (Xenopus laevis (African clawed frog)).